Consider the following 77-residue polypeptide: Dermaseptin-B9 (77 aa).

Residues 1–22 (MAFLKKSLFLVLFLGLVSLSVC) form the signal peptide. Propeptides lie at residues 23–43 (EEEKRENEDEEEQEDDEQSEE) and 76–77 (EQ).

The protein belongs to the frog skin active peptide (FSAP) family. Dermaseptin subfamily. Expressed by the skin glands.

The protein resides in the secreted. Functionally, has antimicrobial activity. Exhibits a bactericidal activity towards several species of mollicutes, firmicutes and gracilicutes. This peptide is membranotropic and it efficiently depolarizes the plasma membrane. The sequence is that of Dermaseptin-B9 (DRG3) from Phyllomedusa bicolor (Two-colored leaf frog).